The following is a 595-amino-acid chain: UvrABC system protein C (595 aa).

A GIY-YIG domain is found at 14-91 (NNPGCYLHKD…IQENMPKFNI (78 aa)). A UVR domain is found at 196–231 (DKIVNQLKAKMKDMSDQMEFERAAEYRDLIEAVSTL).

Belongs to the UvrC family. As to quaternary structure, interacts with UvrB in an incision complex.

It localises to the cytoplasm. Its function is as follows. The UvrABC repair system catalyzes the recognition and processing of DNA lesions. UvrC both incises the 5' and 3' sides of the lesion. The N-terminal half is responsible for the 3' incision and the C-terminal half is responsible for the 5' incision. The chain is UvrABC system protein C from Streptococcus thermophilus (strain ATCC BAA-250 / LMG 18311).